The following is a 125-amino-acid chain: Small ribosomal subunit protein eS8 (125 aa).

Belongs to the eukaryotic ribosomal protein eS8 family. As to quaternary structure, part of the 30S ribosomal subunit.

The protein is Small ribosomal subunit protein eS8 of Methanosarcina acetivorans (strain ATCC 35395 / DSM 2834 / JCM 12185 / C2A).